A 122-amino-acid polypeptide reads, in one-letter code: UPF0738 protein YjbL (122 aa).

The protein belongs to the UPF0738 family.

This chain is UPF0738 protein YjbL (yjbL), found in Bacillus subtilis (strain 168).